Consider the following 317-residue polypeptide: Small glutamine-rich tetratricopeptide repeat-containing protein 2 (317 aa).

TPR repeat units lie at residues 14–48, 83–116, 118–150, and 151–184; these read LKQA…KPEE, AEKL…DPTS, VYYS…DPHH, and ARAF…DPNN. Residues 198 to 215 show a composition bias toward polar residues; sequence LNQPSDSSATSGADQART. Disordered stretches follow at residues 198-224 and 298-317; these read LNQP…PDLG and MNNN…PPPQ.

The protein belongs to the SGT family.

The protein localises to the cytoplasm. It is found in the nucleus. Its function is as follows. Co-chaperone that binds to the molecular chaperone Hsp70 and regulates Hsp70 ATPase activity. The protein is Small glutamine-rich tetratricopeptide repeat-containing protein 2 (sgt2) of Schizosaccharomyces pombe (strain 972 / ATCC 24843) (Fission yeast).